Reading from the N-terminus, the 444-residue chain is MEQDSDLESGRATNQRPPRVRVRGAGVRGRGRVRRRALSEGQRRSPFRLDDLQLPDSLYVTRALQRDHALEMPRGQVDFSLIEAEERRAGPTDEWYFESVKTYRAKPGDDLQTLIKNYAKISLECGAVYEINSKIVVTGACYIIGNCAVLRANLPVGTAMFEVLNVDVIPSIGFMERIVFSNILFDCRSTTAVVCCISERNTLFHNCVFSGPHMLCLDIRAGAEVRGCHFVGAVCALRSKGLYSVRVRNSIFEKCAFGVVSGSKASISHSMFKDCACCIMFGGQGTIAHSHFMATTCTDTPMNLQLCTCEGNGSHVVPLGNIHFASNREAPWPTFNANVLVRVRLYMGRRRGVFHPKQSTFSMCVIAAPRGVVQRIYLFSVYDATCAILQLGEAGDAATERLCTRGMRHNTPSLRAAYVTDTRIDREINSQDTAEFFSSDEDNL.

The interval 1 to 42 (MEQDSDLESGRATNQRPPRVRVRGAGVRGRGRVRRRALSEGQ) is disordered. Residues Ser-438 and Ser-439 each carry the phosphoserine modification.

The protein belongs to the adenoviridae E1B 55 kDa protein family. Interacts with host PML-4 and PML-5; this interaction promotes efficient subnuclear targeting of E1B-55K to PML nuclear bodies. Interacts with E4-ORF3 protein. Interacts with E4-ORF6 protein.

It is found in the host nucleus. Its subcellular location is the host cytoplasm. In terms of biological role, plays a major role to prevent cellular inhibition of viral genome replication. Assembles an SCF-like E3 ubiquitin ligase complex based on the cellular proteins ELOB, ELOC, CUL5 and RBX1, in cooperation with viral E4orf6. This viral RING-type ligase ubiquitinates cellular substrates and targets them to proteasomal degradation: TP53/p53, LIG4, MRE11-RAD50-NBS1 (MRN) complex, ITGA3, DAXX and BLM. E1B-55K probably acts as the substrate-specific adapter of the SCF-like E3 ubiquitin ligase complex. Degradation of host TP53/p53 activity is essential for preventing E1A-induced TP53 accumulation that would otherwise lead to cell apoptosis and growth arrest. E1B-55K also inactivates TP53 transcription-factor activity by binding its transactivation domain. E1B-55K also functions as a SUMO1 E3 ligase for TP53 which causes the latter to be sequestered in promyelocytic leukemia (PML) nuclear bodies thereby contributing to maximal inhibition of TP53 function. The protein is E1B 55 kDa protein of Canis lupus familiaris (Dog).